The primary structure comprises 340 residues: Coproporphyrin III ferrochelatase (340 aa).

Fe-coproporphyrin III-binding residues include S52 and Y116. The Fe(2+) site is built by H172 and E255.

The protein belongs to the ferrochelatase family.

It localises to the cytoplasm. It catalyses the reaction Fe-coproporphyrin III + 2 H(+) = coproporphyrin III + Fe(2+). It participates in porphyrin-containing compound metabolism; protoheme biosynthesis. Involved in coproporphyrin-dependent heme b biosynthesis. Catalyzes the insertion of ferrous iron into coproporphyrin III to form Fe-coproporphyrin III. The polypeptide is Coproporphyrin III ferrochelatase (Mycobacterium marinum (strain ATCC BAA-535 / M)).